Consider the following 273-residue polypeptide: Dermonecrotic toxin LruSicTox-alphaIC1d (273 aa).

His5 is a catalytic residue. Residues Glu25 and Asp27 each coordinate Mg(2+). The active-site Nucleophile is His41. 2 disulfides stabilise this stretch: Cys45/Cys51 and Cys47/Cys190. Asp85 serves as a coordination point for Mg(2+).

This sequence belongs to the arthropod phospholipase D family. Class II subfamily. The cofactor is Mg(2+). In terms of tissue distribution, expressed by the venom gland.

The protein resides in the secreted. It catalyses the reaction an N-(acyl)-sphingosylphosphocholine = an N-(acyl)-sphingosyl-1,3-cyclic phosphate + choline. It carries out the reaction an N-(acyl)-sphingosylphosphoethanolamine = an N-(acyl)-sphingosyl-1,3-cyclic phosphate + ethanolamine. The catalysed reaction is a 1-acyl-sn-glycero-3-phosphocholine = a 1-acyl-sn-glycero-2,3-cyclic phosphate + choline. The enzyme catalyses a 1-acyl-sn-glycero-3-phosphoethanolamine = a 1-acyl-sn-glycero-2,3-cyclic phosphate + ethanolamine. Functionally, dermonecrotic toxins cleave the phosphodiester linkage between the phosphate and headgroup of certain phospholipids (sphingolipid and lysolipid substrates), forming an alcohol (often choline) and a cyclic phosphate. This toxin acts on sphingomyelin (SM). It may also act on ceramide phosphoethanolamine (CPE), lysophosphatidylcholine (LPC) and lysophosphatidylethanolamine (LPE), but not on lysophosphatidylserine (LPS), and lysophosphatidylglycerol (LPG). It acts by transphosphatidylation, releasing exclusively cyclic phosphate products as second products. Induces dermonecrosis, hemolysis, increased vascular permeability, edema, inflammatory response, and platelet aggregation. This is Dermonecrotic toxin LruSicTox-alphaIC1d from Loxosceles rufescens (Mediterranean recluse spider).